The following is a 480-amino-acid chain: Amino acid permease 5 (480 aa).

A disordered region spans residues Met-1 to Arg-25. Topologically, residues Met-1–Thr-31 are cytoplasmic. Over residues Val-11–Arg-25 the composition is skewed to basic and acidic residues. 2 helical membrane-spanning segments follow: residues Val-32–Ala-52 and Trp-53–Val-73. The Cytoplasmic portion of the chain corresponds to Thr-74–Tyr-120. Residues Val-121–Ile-141 form a helical membrane-spanning segment. Residues Gln-142–His-157 lie on the Extracellular side of the membrane. Residues Val-158 to Pro-178 traverse the membrane as a helical segment. Over Asp-179 to Gln-182 the chain is Cytoplasmic. The chain crosses the membrane as a helical span at residues Leu-183 to Gly-203. At Leu-204 to Arg-241 the chain is on the extracellular side. The chain crosses the membrane as a helical span at residues Thr-242–Ile-262. Topologically, residues Gln-263–Thr-280 are cytoplasmic. The helical transmembrane segment at Phe-281–Ala-301 threads the bilayer. The Extracellular segment spans residues Phe-302 to Leu-328. The chain crosses the membrane as a helical span at residues Ala-329–Val-349. Residues Glu-350–Arg-383 lie on the Cytoplasmic side of the membrane. Residues Leu-384–Phe-404 traverse the membrane as a helical segment. Residues Asn-405–Asp-406 lie on the Extracellular side of the membrane. A helical membrane pass occupies residues Val-407–Met-427. Over Tyr-428–Gln-445 the chain is Cytoplasmic. A helical membrane pass occupies residues Val-446–Ile-466. Residues Val-467–Phe-480 are Extracellular-facing.

The protein belongs to the amino acid/polyamine transporter 2 family. Amino acid/auxin permease (AAAP) (TC 2.A.18.2) subfamily. As to expression, expressed in leaves, stems, roots, siliques and flowers.

It is found in the cell membrane. Inhibited by 2,4-dinitrophenol. Functionally, amino acid-proton symporter. Stereospecific transporter with a broad specificity for glutamate and both neutral and basic amino acids. Reduced affinities for asparagine and valine. High affinity transport of the cationic amino acids arginine and lysine, but not of histidine. This is Amino acid permease 5 (AAP5) from Arabidopsis thaliana (Mouse-ear cress).